The following is a 205-amino-acid chain: Pyridoxal 5'-phosphate synthase subunit PdxT (205 aa).

52–54 (GES) is an L-glutamine binding site. Residue Cys84 is the Nucleophile of the active site. L-glutamine is bound by residues Arg116 and 145–146 (IR). Active-site charge relay system residues include His185 and Glu187.

It belongs to the glutaminase PdxT/SNO family. As to quaternary structure, in the presence of PdxS, forms a dodecamer of heterodimers. Only shows activity in the heterodimer.

The catalysed reaction is aldehydo-D-ribose 5-phosphate + D-glyceraldehyde 3-phosphate + L-glutamine = pyridoxal 5'-phosphate + L-glutamate + phosphate + 3 H2O + H(+). It carries out the reaction L-glutamine + H2O = L-glutamate + NH4(+). It participates in cofactor biosynthesis; pyridoxal 5'-phosphate biosynthesis. In terms of biological role, catalyzes the hydrolysis of glutamine to glutamate and ammonia as part of the biosynthesis of pyridoxal 5'-phosphate. The resulting ammonia molecule is channeled to the active site of PdxS. This is Pyridoxal 5'-phosphate synthase subunit PdxT from Staphylothermus marinus (strain ATCC 43588 / DSM 3639 / JCM 9404 / F1).